Reading from the N-terminus, the 188-residue chain is Threonylcarbamoyl-AMP synthase (188 aa).

A YrdC-like domain is found at glutamine 3 to serine 188.

This sequence belongs to the SUA5 family. TsaC subfamily.

It localises to the cytoplasm. It catalyses the reaction L-threonine + hydrogencarbonate + ATP = L-threonylcarbamoyladenylate + diphosphate + H2O. Required for the formation of a threonylcarbamoyl group on adenosine at position 37 (t(6)A37) in tRNAs that read codons beginning with adenine. Catalyzes the conversion of L-threonine, HCO(3)(-)/CO(2) and ATP to give threonylcarbamoyl-AMP (TC-AMP) as the acyladenylate intermediate, with the release of diphosphate. This is Threonylcarbamoyl-AMP synthase from Shewanella frigidimarina (strain NCIMB 400).